Reading from the N-terminus, the 346-residue chain is Queuosine 5'-phosphate N-glycosylase/hydrolase (346 aa).

The queuine site is built by histidine 49, phenylalanine 243, aspartate 245, aspartate 310, and aspartate 315. The active-site Nucleophile or transition state stabilizer is aspartate 245.

Belongs to the QNG1 protein family.

It catalyses the reaction queuosine 5'-phosphate + H2O = queuine + D-ribose 5-phosphate. In terms of biological role, catalyzes the hydrolysis of queuosine 5'-phosphate, releasing the nucleobase queuine (q). Is required for salvage of queuine from exogenous queuosine (Q) that is imported and then converted to queuosine 5'-phosphate intracellularly. The protein is Queuosine 5'-phosphate N-glycosylase/hydrolase of Schizosaccharomyces pombe (strain 972 / ATCC 24843) (Fission yeast).